A 319-amino-acid chain; its full sequence is Melanoma-associated antigen B2 (319 aa).

A compositionally biased stretch (basic residues) spans 1–17 (MPRGQKSKLRAREKRRK). The tract at residues 1–112 (MPRGQKSKLR…TKSPSEDPLT (112 aa)) is disordered. 3 stretches are compositionally biased toward low complexity: residues 39-57 (PCCSSSVSGGAASSSPAAG), 67-79 (TTAAAAAAGVSST), and 94-105 (ASSSQASTSTKS). Residues Ser-77 and Ser-105 each carry the phosphoserine modification. The region spanning 111–310 (LTRKSGSLVQ…CAFPTHYEEA (200 aa)) is the MAGE domain.

In terms of assembly, interacts with TRIM28. Expressed in testis and placenta, and in a significant fraction of tumors of various histologic types.

Its function is as follows. May enhance ubiquitin ligase activity of RING-type zinc finger-containing E3 ubiquitin-protein ligases. Proposed to act through recruitment and/or stabilization of the Ubl-conjugating enzyme (E2) at the E3:substrate complex. The chain is Melanoma-associated antigen B2 (MAGEB2) from Homo sapiens (Human).